A 190-amino-acid polypeptide reads, in one-letter code: NADH-quinone oxidoreductase subunit B (190 aa).

Cys39, Cys40, Cys104, and Cys135 together coordinate [4Fe-4S] cluster.

This sequence belongs to the complex I 20 kDa subunit family. NDH-1 is composed of 14 different subunits. Subunits NuoB, C, D, E, F, and G constitute the peripheral sector of the complex. [4Fe-4S] cluster serves as cofactor.

Its subcellular location is the cell inner membrane. The catalysed reaction is a quinone + NADH + 5 H(+)(in) = a quinol + NAD(+) + 4 H(+)(out). In terms of biological role, NDH-1 shuttles electrons from NADH, via FMN and iron-sulfur (Fe-S) centers, to quinones in the respiratory chain. The immediate electron acceptor for the enzyme in this species is believed to be a menaquinone. Couples the redox reaction to proton translocation (for every two electrons transferred, four hydrogen ions are translocated across the cytoplasmic membrane), and thus conserves the redox energy in a proton gradient. This Chlorobium chlorochromatii (strain CaD3) protein is NADH-quinone oxidoreductase subunit B.